The sequence spans 123 residues: TYMS opposite strand protein (123 aa).

The interval M57–I111 is disordered. Positions H91–L101 are enriched in basic residues.

This Homo sapiens (Human) protein is TYMS opposite strand protein (TYMSOS).